Reading from the N-terminus, the 75-residue chain is Pi-hexatoxin-Hi1d (75 aa).

6 cysteine pairs are disulfide-bonded: cysteine 3–cysteine 18, cysteine 10–cysteine 23, cysteine 17–cysteine 33, cysteine 40–cysteine 55, cysteine 47–cysteine 60, and cysteine 54–cysteine 71. Domain repeat units follow at residues 3 to 33 (CIRKWLSCVDRKNDCCEGLECYKRRHSFEVC) and 40 to 71 (CLVKWKQCDGRERDCCAGLECWKRSGNKSSVC). The tract at residues 3-71 (CIRKWLSCVD…KRSGNKSSVC (69 aa)) is 2 X approximate repeats with cysteine pattern C-C-CC-C-C.

It belongs to the psalmotoxin-1 family. Double-knot toxin subfamily. As to expression, expressed by the venom gland.

It localises to the secreted. This toxin potently and selectively inhibits ASIC1a, an isoform of the gene ASIC1. It incompletely inhibits ASIC1a activation in a pH-independent and slowly reversible manner. This toxin acts by binding to and stabilizing the closed state of the channel, thereby impeding the transition into a conducting state. This toxin may bind to the acidic pocket of ASIC1a, since mutation of a key residue of this pocket (Arg-350) abolishes the ability of the toxin to inhibit ASIC1a. In vivo, this toxin protects the brain from neuronal injury when administered up to 8 hours after stroke onset. This Hadronyche infensa (Fraser island funnel-web spider) protein is Pi-hexatoxin-Hi1d.